Here is a 593-residue protein sequence, read N- to C-terminus: Sodium-independent sulfate anion transporter (593 aa).

The Extracellular segment spans residues 1–34; the sequence is MAPDTCCCSATALRRRLPVLAWVPDYSLQWLRLD. Residues 35 to 55 form a helical membrane-spanning segment; it reads FIAGLSVGLTVIPQALAYAEV. Position 56 (Ala56) is a topological domain, cytoplasmic. A helical membrane pass occupies residues 57–77; sequence GLPPQYGLYSAFMGCFVYFFL. At 78 to 82 the chain is on the extracellular side; that stretch reads GTSRD. A helical transmembrane segment spans residues 83-100; the sequence is VTLGPTAIMSLLVSFYTF. The Cytoplasmic portion of the chain corresponds to 101–106; sequence REPAYA. The helical transmembrane segment at 107–127 threads the bilayer; the sequence is VLLAFLSGCIQLAMGLLHLGF. Topologically, residues 128–176 are extracellular; it reads LLDFISCPVIKGFTSAASITIGFGQIKNLLGLQKIPRQFFLQVYHTFLH. The helical transmembrane segment at 177 to 197 threads the bilayer; it reads IGETRVGDAVLGLASMLLLLV. The Cytoplasmic portion of the chain corresponds to 198–233; that stretch reads LKCMREHMPPPHPEMPLAVKFSRGLVWTVTTARNAL. The chain crosses the membrane as a helical span at residues 234–254; it reads VVSSAALIAYAFEVTGSHPFV. Topologically, residues 255–287 are extracellular; the sequence is LTGKIAEGLPPVRIPPFSVTRDNKTISFSEMVQ. The helical transmembrane segment at 288–308 threads the bilayer; that stretch reads DMGAGLAVVPLMGLLESIAVA. The Cytoplasmic portion of the chain corresponds to 309–324; that stretch reads KSFASQNNYRIDANQE. A helical membrane pass occupies residues 325 to 345; that stretch reads LLAIGLTNVLGSLVSSYPVTG. The Extracellular portion of the chain corresponds to 346–361; it reads SFGRTAVNAQTGVCTP. The helical transmembrane segment at 362-382 threads the bilayer; it reads AGGLVTGALVLLSLNYLTSLF. Residue Ser383 is a topological domain, cytoplasmic. Residues 384–404 form a helical membrane-spanning segment; that stretch reads YIPKSALAAVIITAVTPLFDV. The Extracellular portion of the chain corresponds to 405–417; sequence KIFRSLWRVQRLD. Residues 418–438 form a helical membrane-spanning segment; that stretch reads LLPLCVTFLLSFWEIQYGILA. The Cytoplasmic segment spans residues 439–593; it reads GSLVSLLILL…SSLLKSPSGP (155 aa). The STAS domain occupies 453–566; sequence RPKTQVSEGQ…EEAEKFLQQE (114 aa). The disordered stretch occupies residues 564–593; that stretch reads QQEPGTEPNSIHEDAVPEQRSSLLKSPSGP. Over residues 582 to 593 the composition is skewed to polar residues; that stretch reads QRSSLLKSPSGP.

This sequence belongs to the SLC26A/SulP transporter (TC 2.A.53) family. As to expression, abundantly expressed in the cerebellum, with a predominant expression in Purkinje cells (at protein level). Predominantly expressed in the kidney and brain. In the kidney localizes in collecting duct intercalated cells (at protein level). In terms of tissue distribution, predominantly expressed in the brain with lower levels in the kidney.

The protein localises to the cell membrane. Its subcellular location is the lysosome membrane. It localises to the apical cell membrane. It is found in the basolateral cell membrane. The enzyme catalyses hydrogencarbonate(in) + chloride(out) = hydrogencarbonate(out) + chloride(in). The catalysed reaction is sulfate(in) + H(+)(in) = sulfate(out) + H(+)(out). It catalyses the reaction oxalate(in) + chloride(out) = oxalate(out) + chloride(in). Its function is as follows. Sodium-independent anion exchanger mediating bicarbonate, chloride, sulfate and oxalate transport. Exhibits sodium-independent sulfate anion transporter activity that may cooperate with SLC26A2 to mediate DIDS-sensitive sulfate uptake into high endothelial venules endothelial cells (HEVEC). In the kidney, mediates chloride-bicarbonate exchange, facilitating V-ATPase-mediated acid secretion. May function as a chloride channel, playing an important role in moderating chloride homeostasis and neuronal activity in the cerebellum. This chain is Sodium-independent sulfate anion transporter, found in Mus musculus (Mouse).